A 250-amino-acid chain; its full sequence is ATP synthase subunit a (250 aa).

A run of 5 helical transmembrane segments spans residues 27 to 47, 86 to 106, 129 to 149, 191 to 211, and 219 to 239; these read TDTV…AFYL, FVLP…WLAV, INYV…AGIW, IFAG…IMWA, and FDLF…ILYF.

It belongs to the ATPase A chain family. As to quaternary structure, F-type ATPases have 2 components, CF(1) - the catalytic core - and CF(0) - the membrane proton channel. CF(1) has five subunits: alpha(3), beta(3), gamma(1), delta(1), epsilon(1). CF(0) has three main subunits: a(1), b(2) and c(9-12). The alpha and beta chains form an alternating ring which encloses part of the gamma chain. CF(1) is attached to CF(0) by a central stalk formed by the gamma and epsilon chains, while a peripheral stalk is formed by the delta and b chains.

It localises to the cell membrane. In terms of biological role, key component of the proton channel; it plays a direct role in the translocation of protons across the membrane. The polypeptide is ATP synthase subunit a (Mycobacterium bovis (strain ATCC BAA-935 / AF2122/97)).